The primary structure comprises 267 residues: Regulatory protein VirG (267 aa).

The Response regulatory domain occupies 29–143; the sequence is HVLLVDDDVA…EFLARIRVAL (115 aa). The residue at position 78 (Asp-78) is a 4-aspartylphosphate. Residues 155-255 constitute a DNA-binding region (ompR/PhoB-type); the sequence is RRSFCFTDWT…ARGAGYFFDA (101 aa).

In terms of processing, phosphorylated by wide host range (WHR) VirA protein.

It is found in the cytoplasm. In terms of biological role, virG is required for the positive regulation of at least two vir loci encoded by the Ti plasmid of A.tumefaciens. This is Regulatory protein VirG (virG) from Rhizobium radiobacter (Agrobacterium tumefaciens).